A 420-amino-acid chain; its full sequence is 3-isopropylmalate dehydratase large subunit (420 aa).

Positions 300, 360, and 363 each coordinate [4Fe-4S] cluster.

It belongs to the aconitase/IPM isomerase family. LeuC type 2 subfamily. As to quaternary structure, heterodimer of LeuC and LeuD. Requires [4Fe-4S] cluster as cofactor.

It catalyses the reaction (2R,3S)-3-isopropylmalate = (2S)-2-isopropylmalate. The protein operates within amino-acid biosynthesis; L-leucine biosynthesis; L-leucine from 3-methyl-2-oxobutanoate: step 2/4. In terms of biological role, catalyzes the isomerization between 2-isopropylmalate and 3-isopropylmalate, via the formation of 2-isopropylmaleate. This is 3-isopropylmalate dehydratase large subunit from Heliobacterium modesticaldum (strain ATCC 51547 / Ice1).